Consider the following 580-residue polypeptide: Amino-acid acetyltransferase, mitochondrial (580 aa).

Residues 403-560 (LTMQNLFDDK…NPRHKNGVVN (158 aa)) enclose the N-acetyltransferase domain.

Belongs to the acetyltransferase family.

The protein resides in the mitochondrion. It carries out the reaction L-glutamate + acetyl-CoA = N-acetyl-L-glutamate + CoA + H(+). It functions in the pathway amino-acid biosynthesis; L-arginine biosynthesis; N(2)-acetyl-L-ornithine from L-glutamate: step 1/4. Functionally, N-acetylglutamate synthase involved in arginine biosynthesis. In Candida dubliniensis (strain CD36 / ATCC MYA-646 / CBS 7987 / NCPF 3949 / NRRL Y-17841) (Yeast), this protein is Amino-acid acetyltransferase, mitochondrial (ARG2).